The following is a 290-amino-acid chain: 4-hydroxy-tetrahydrodipicolinate synthase (290 aa).

Position 44 (threonine 44) interacts with pyruvate. Tyrosine 132 serves as the catalytic Proton donor/acceptor. Lysine 160 acts as the Schiff-base intermediate with substrate in catalysis. A pyruvate-binding site is contributed by isoleucine 202.

This sequence belongs to the DapA family. Homotetramer; dimer of dimers.

The protein resides in the cytoplasm. It catalyses the reaction L-aspartate 4-semialdehyde + pyruvate = (2S,4S)-4-hydroxy-2,3,4,5-tetrahydrodipicolinate + H2O + H(+). Its pathway is amino-acid biosynthesis; L-lysine biosynthesis via DAP pathway; (S)-tetrahydrodipicolinate from L-aspartate: step 3/4. Its function is as follows. Catalyzes the condensation of (S)-aspartate-beta-semialdehyde [(S)-ASA] and pyruvate to 4-hydroxy-tetrahydrodipicolinate (HTPA). The polypeptide is 4-hydroxy-tetrahydrodipicolinate synthase (Alkaliphilus oremlandii (strain OhILAs) (Clostridium oremlandii (strain OhILAs))).